Here is a 120-residue protein sequence, read N- to C-terminus: Putative non-specific lipid-transfer protein 14 (120 aa).

Positions 1-22 (MTRSFSPVVSLFLLLLQTICSA) are cleaved as a signal peptide. Disulfide bonds link C30-C80, C40-C57, C58-C102, and C78-C116.

Belongs to the plant LTP family.

Functionally, plant non-specific lipid-transfer proteins transfer phospholipids as well as galactolipids across membranes. May play a role in wax or cutin deposition in the cell walls of expanding epidermal cells and certain secretory tissues. The protein is Putative non-specific lipid-transfer protein 14 (LTP14) of Arabidopsis thaliana (Mouse-ear cress).